The sequence spans 460 residues: UDP-N-acetylmuramoylalanine--D-glutamate ligase (460 aa).

Residue 123–129 participates in ATP binding; sequence GTNGKTT.

Belongs to the MurCDEF family.

The protein resides in the cytoplasm. It carries out the reaction UDP-N-acetyl-alpha-D-muramoyl-L-alanine + D-glutamate + ATP = UDP-N-acetyl-alpha-D-muramoyl-L-alanyl-D-glutamate + ADP + phosphate + H(+). It functions in the pathway cell wall biogenesis; peptidoglycan biosynthesis. Cell wall formation. Catalyzes the addition of glutamate to the nucleotide precursor UDP-N-acetylmuramoyl-L-alanine (UMA). The polypeptide is UDP-N-acetylmuramoylalanine--D-glutamate ligase (murD) (Enterococcus hirae).